Consider the following 120-residue polypeptide: Large ribosomal subunit protein uL18 (120 aa).

It belongs to the universal ribosomal protein uL18 family. In terms of assembly, part of the 50S ribosomal subunit; part of the 5S rRNA/L5/L18/L25 subcomplex. Contacts the 5S and 23S rRNAs.

Functionally, this is one of the proteins that bind and probably mediate the attachment of the 5S RNA into the large ribosomal subunit, where it forms part of the central protuberance. In Gluconobacter oxydans (strain 621H) (Gluconobacter suboxydans), this protein is Large ribosomal subunit protein uL18.